The chain runs to 84 residues: Cytochrome b559 subunit alpha (84 aa).

A helical transmembrane segment spans residues 22-36 (VIHSITIPALFVAGW). Position 24 (H24) interacts with heme.

The protein belongs to the PsbE/PsbF family. In terms of assembly, heterodimer of an alpha subunit and a beta subunit. PSII is composed of 1 copy each of membrane proteins PsbA, PsbB, PsbC, PsbD, PsbE, PsbF, PsbH, PsbI, PsbJ, PsbK, PsbL, PsbM, PsbT, PsbX, PsbY, PsbZ, Psb30/Ycf12, at least 3 peripheral proteins of the oxygen-evolving complex and a large number of cofactors. It forms dimeric complexes. Heme b is required as a cofactor.

The protein localises to the plastid. It is found in the chloroplast thylakoid membrane. In terms of biological role, this b-type cytochrome is tightly associated with the reaction center of photosystem II (PSII). PSII is a light-driven water:plastoquinone oxidoreductase that uses light energy to abstract electrons from H(2)O, generating O(2) and a proton gradient subsequently used for ATP formation. It consists of a core antenna complex that captures photons, and an electron transfer chain that converts photonic excitation into a charge separation. The sequence is that of Cytochrome b559 subunit alpha from Porphyra purpurea (Red seaweed).